A 141-amino-acid chain; its full sequence is MAKKVEKLVKLQIPAGKATPAPPVGPALGQAGINIMGFTKEFNARTADQAGMIIPVVISVYEDKSFTFVTKTPPAAVLLKKAAGVEKGSGTPNKTKVATVTRAQVQEIAETKMPDLNAANIESAMRMIEGTARSMGFTVVD.

This sequence belongs to the universal ribosomal protein uL11 family. In terms of assembly, part of the ribosomal stalk of the 50S ribosomal subunit. Interacts with L10 and the large rRNA to form the base of the stalk. L10 forms an elongated spine to which L12 dimers bind in a sequential fashion forming a multimeric L10(L12)X complex. Post-translationally, one or more lysine residues are methylated.

Functionally, forms part of the ribosomal stalk which helps the ribosome interact with GTP-bound translation factors. This Streptococcus pneumoniae (strain Hungary19A-6) protein is Large ribosomal subunit protein uL11.